Consider the following 157-residue polypeptide: Transcription factor HES-2 (157 aa).

One can recognise a bHLH domain in the interval 13-70 (LRKSLKPLLEKRRRARINESLSQLKGLVLPLLGAETSRYSKLEKADILEMTVRFLREQ). The Orange domain occupies 86 to 119 (YLEGYRACLARLARVLPACSVLEPAVSARLLEHL). The segment at 124-157 (VSGGPPSLTPASASAPAPSPPVPPPSSLGLWRPW) is disordered. Over residues 125-139 (SGGPPSLTPASASAP) the composition is skewed to low complexity. Positions 140-149 (APSPPVPPPS) are enriched in pro residues. Positions 154–157 (WRPW) match the WRPW motif motif.

In terms of assembly, transcription repression requires formation of a complex with a corepressor protein of the Groucho/TLE family.

It localises to the nucleus. Functionally, transcriptional repressor of genes that require a bHLH protein for their transcription. The protein is Transcription factor HES-2 (Hes2) of Rattus norvegicus (Rat).